We begin with the raw amino-acid sequence, 172 residues long: 3-hydroxydecanoyl-[acyl-carrier-protein] dehydratase (172 aa).

His-71 is a catalytic residue.

It belongs to the thioester dehydratase family. FabA subfamily. Homodimer.

It is found in the cytoplasm. It catalyses the reaction a (3R)-hydroxyacyl-[ACP] = a (2E)-enoyl-[ACP] + H2O. It carries out the reaction (3R)-hydroxydecanoyl-[ACP] = (2E)-decenoyl-[ACP] + H2O. The enzyme catalyses (2E)-decenoyl-[ACP] = (3Z)-decenoyl-[ACP]. It functions in the pathway lipid metabolism; fatty acid biosynthesis. Functionally, necessary for the introduction of cis unsaturation into fatty acids. Catalyzes the dehydration of (3R)-3-hydroxydecanoyl-ACP to E-(2)-decenoyl-ACP and then its isomerization to Z-(3)-decenoyl-ACP. Can catalyze the dehydratase reaction for beta-hydroxyacyl-ACPs with saturated chain lengths up to 16:0, being most active on intermediate chain length. The sequence is that of 3-hydroxydecanoyl-[acyl-carrier-protein] dehydratase from Salmonella choleraesuis (strain SC-B67).